The following is a 593-amino-acid chain: Arginine--tRNA ligase (593 aa).

A 'HIGH' region motif is present at residues 123 to 133 (PNVAKPMHVGH).

This sequence belongs to the class-I aminoacyl-tRNA synthetase family. In terms of assembly, monomer.

It localises to the cytoplasm. The catalysed reaction is tRNA(Arg) + L-arginine + ATP = L-arginyl-tRNA(Arg) + AMP + diphosphate. In Phenylobacterium zucineum (strain HLK1), this protein is Arginine--tRNA ligase.